Reading from the N-terminus, the 496-residue chain is 1-aminocyclopropane-1-carboxylate synthase 4 (496 aa).

Position 300 is an N6-(pyridoxal phosphate)lysine (Lys300).

Belongs to the class-I pyridoxal-phosphate-dependent aminotransferase family. Pyridoxal 5'-phosphate is required as a cofactor. Expressed in leaves. Expressed in shoots and leaf blades. Expressed at low levels in leaf sheaths.

The enzyme catalyses S-adenosyl-L-methionine = 1-aminocyclopropane-1-carboxylate + S-methyl-5'-thioadenosine + H(+). It participates in alkene biosynthesis; ethylene biosynthesis via S-adenosyl-L-methionine; ethylene from S-adenosyl-L-methionine: step 1/2. Functionally, catalyzes the formation of 1-aminocyclopropane-1-carboxylate, a direct precursor of ethylene in higher plants. The chain is 1-aminocyclopropane-1-carboxylate synthase 4 from Oryza sativa subsp. japonica (Rice).